The following is a 403-amino-acid chain: Ribosomal RNA large subunit methyltransferase I (403 aa).

Residues 9-88 (YPRLVLSKGR…ESIDIAFFTR (80 aa)) form the PUA domain.

This sequence belongs to the methyltransferase superfamily. RlmI family.

The protein resides in the cytoplasm. The catalysed reaction is cytidine(1962) in 23S rRNA + S-adenosyl-L-methionine = 5-methylcytidine(1962) in 23S rRNA + S-adenosyl-L-homocysteine + H(+). In terms of biological role, specifically methylates the cytosine at position 1962 (m5C1962) of 23S rRNA. The polypeptide is Ribosomal RNA large subunit methyltransferase I (Salmonella typhi).